Here is a 280-residue protein sequence, read N- to C-terminus: MTSKSTLSYAERARQHDNPIARKLFEIAEAKKSNVVVSADLTTTKELLELADHLGPYIAVLKTHIDIVSDFNKETVFGLKSLSEKHNFLIFEDRKFVDIGNTVQKQYHGGALRISEWAHLVNASILAGDGIVEALAQTGTSDAFEHKGERGLLMLAEMTTRGTFATGAYTKASIESAKKHSSFVIGFISNQALTSIETQIPATHMEDFIVFTTGVNRATKGDPLGQQYQTPEAAIKRGADFIISGRGIYATSDPIQAAKLYQNEGWAAYETRIKNRSTGY.

Residues D40, 62-64, 93-102, Y228, and R246 each bind substrate; these read KTH and DRKFVDIGNT. The active-site Proton donor is the K95.

Belongs to the OMP decarboxylase family.

The catalysed reaction is orotidine 5'-phosphate + H(+) = UMP + CO2. The protein operates within pyrimidine metabolism; UMP biosynthesis via de novo pathway; UMP from orotate: step 2/2. The sequence is that of Orotidine 5'-phosphate decarboxylase (PYRG) from Solorina crocea.